The sequence spans 104 residues: MRTYETVTILKPQLSDNEVAEFLNSAKEFITKAGGEIVSEEKLGRRRFTHEIDHVRDGFYVYLKFRALPAFVKSWDEMAKLNEQILRSIVMLSIEIKAKAQTVK.

The protein belongs to the bacterial ribosomal protein bS6 family.

Its function is as follows. Binds together with bS18 to 16S ribosomal RNA. This is Small ribosomal subunit protein bS6 from Elusimicrobium minutum (strain Pei191).